A 1165-amino-acid polypeptide reads, in one-letter code: ATP-dependent helicase/deoxyribonuclease subunit B (1165 aa).

In terms of domain architecture, UvrD-like helicase ATP-binding spans M1–R298. Residue G8–T15 participates in ATP binding. The UvrD-like helicase C-terminal domain maps to P279–D584. The [4Fe-4S] cluster site is built by C800, C1119, C1122, and C1128.

It belongs to the helicase family. AddB/RexB type 1 subfamily. As to quaternary structure, heterodimer of AddA and AddB. Requires Mg(2+) as cofactor. [4Fe-4S] cluster serves as cofactor.

Functionally, the heterodimer acts as both an ATP-dependent DNA helicase and an ATP-dependent, dual-direction single-stranded exonuclease. Recognizes the chi site generating a DNA molecule suitable for the initiation of homologous recombination. The AddB subunit has 5' -&gt; 3' nuclease activity but not helicase activity. This chain is ATP-dependent helicase/deoxyribonuclease subunit B, found in Desulforudis audaxviator (strain MP104C).